The primary structure comprises 339 residues: MPNASEHSFPFPILIGDIGGTNARFALLTDAYGEPKQLAPIRTGDFATIEEAMQKGILDKTSVQPRSAILAVAGPIKGDEIPLTNAGWVIRPKDMLAGLGLEDVLVINDFEAQALAIAAPADQDVVQIGGGAVRPFHSRVVLGPGTGLGVAGLVYAQHTWIPVPGEGGHVDIGPRTERDFRIWPFLEPIEGRMAGEQILCGRGIMNLYRAVCAANGEEAVLADQAAVTTSALSGADAAAVETVSLFATYLGRVAGDMALIFMARGGVFLAGGISQKILPALTKPEFRAAFEDKAPHSALMRTIPTFAVIHPMAALSGLAAFARTPRDFGVAMEGRRWRR.

G16–T21 lines the ATP pocket.

This sequence belongs to the bacterial glucokinase family.

Its subcellular location is the cytoplasm. It carries out the reaction D-glucose + ATP = D-glucose 6-phosphate + ADP + H(+). This is Glucokinase from Rhizobium meliloti (strain 1021) (Ensifer meliloti).